The primary structure comprises 604 residues: MAVSAQLLVEELQIFGLECEEAVIEKLVELCILYGQNEEGMASELIAFCTSTRKDCFTLETLNSFEHEFLSKRVSKTRHGASKDKGLRHAGARDIVSIQELIEVEEEEETLLNSYTTPSKGSQKRTITTPETPLTKRSVSARSPHQLLSPSSFSPSATPPQKYSSRSNRGEVVTSFGSAQGVSWSGRGGASPLSLKVLGHPEPLTGSYKYMFQKLPDIREVLTCKIEELGSELKEHYKIEAFAPILVPAQEPVTLLGQIGCDSNGKLNHKSVILEGDLEHSSGAQIPVDLSELKEYSLFPGQVVVMEGINTTGRKLVATRLYEGVPLPFHQPDEEDGDSEQFMVLVACGPYTTSDSITFDPLLDLITIINRDRPDVCILFGPFLDAKHEQVESCLLTSSFEDVFKQCLRTIIEGTRSSGSHLIIVPSLRDVHHEPVYPQPPFSCSDLLREDKKRVRLVSEPCTLSINGVIFGLTSTDLLFHMGAEEISSSSGTSDRFSRILRHILTQRSYYPLYPPQEDMAIDYENFYLYAQLPVTPDVFIAPSELRYFVKVGLNSAISLQCQNQFLSGALALNSSRVCWWGQWPRSFGGGVGVENKSVSIMLK.

The segment at E109–E171 is disordered. A compositionally biased stretch (polar residues) spans N113–A141. T129 and T132 each carry phosphothreonine. 4 positions are modified to phosphoserine: S143, S149, S154, and S156. A compositionally biased stretch (low complexity) spans S143 to P160.

It belongs to the DNA polymerase alpha subunit B family. As to quaternary structure, component of the alpha DNA polymerase complex (also known as the alpha DNA polymerase-primase complex) consisting of four subunits: the catalytic subunit POLA1, the regulatory subunit POLA2, and the primase complex subunits PRIM1 and PRIM2 respectively. Within the complex, POLA1 directly interacts with PRIM2. Post-translationally, phosphorylated in a cell cycle-dependent manner, in G2/M phase.

It is found in the nucleus. Its function is as follows. Accessory subunit of the DNA polymerase alpha complex (also known as the alpha DNA polymerase-primase complex) which plays an essential role in the initiation of DNA synthesis. During the S phase of the cell cycle, the DNA polymerase alpha complex (composed of a catalytic subunit POLA1, an accessory subunit POLA2 and two primase subunits, the catalytic subunit PRIM1 and the regulatory subunit PRIM2) is recruited to DNA at the replicative forks via direct interactions with MCM10 and WDHD1. The primase subunit of the polymerase alpha complex initiates DNA synthesis by oligomerising short RNA primers on both leading and lagging strands. These primers are initially extended by the polymerase alpha catalytic subunit and subsequently transferred to polymerase delta and polymerase epsilon for processive synthesis on the lagging and leading strand, respectively. The protein is DNA polymerase alpha subunit B (POLA2) of Bos taurus (Bovine).